The primary structure comprises 112 residues: uncharacterized protein (112 aa).

This is an uncharacterized protein from Archaeoglobus fulgidus (strain ATCC 49558 / DSM 4304 / JCM 9628 / NBRC 100126 / VC-16).